A 354-amino-acid chain; its full sequence is Uroporphyrinogen decarboxylase (354 aa).

Residues 27 to 31, aspartate 77, tyrosine 154, serine 209, and histidine 327 each bind substrate; that span reads RQAGR.

The protein belongs to the uroporphyrinogen decarboxylase family. Homodimer.

The protein resides in the cytoplasm. The enzyme catalyses uroporphyrinogen III + 4 H(+) = coproporphyrinogen III + 4 CO2. Its pathway is porphyrin-containing compound metabolism; protoporphyrin-IX biosynthesis; coproporphyrinogen-III from 5-aminolevulinate: step 4/4. Catalyzes the decarboxylation of four acetate groups of uroporphyrinogen-III to yield coproporphyrinogen-III. In Pseudoalteromonas translucida (strain TAC 125), this protein is Uroporphyrinogen decarboxylase.